Here is a 21-residue protein sequence, read N- to C-terminus: Nigrocin-2GRb (21 aa).

Expressed by the skin glands.

The protein localises to the secreted. In terms of biological role, antimicrobial peptide active against the Gram-positive bacterium S.aureus (MIC=12.5 uM) and against the Gram-negative bacteria E.coli (MIC=3 uM). Has antifungal activity against C.albicans (MIC=50 uM). Has some hemolytic activity against human erythrocytes (LC(50)=40 uM). This is Nigrocin-2GRb from Odorrana grahami (Yunnanfu frog).